The primary structure comprises 272 residues: Acetylglutamate kinase (272 aa).

Substrate-binding positions include 46–47 (GA), Arg-68, and Asn-166.

The protein belongs to the acetylglutamate kinase family. ArgB subfamily.

The protein localises to the cytoplasm. The enzyme catalyses N-acetyl-L-glutamate + ATP = N-acetyl-L-glutamyl 5-phosphate + ADP. It functions in the pathway amino-acid biosynthesis; L-arginine biosynthesis; N(2)-acetyl-L-ornithine from L-glutamate: step 2/4. Its function is as follows. Catalyzes the ATP-dependent phosphorylation of N-acetyl-L-glutamate. This chain is Acetylglutamate kinase, found in Dehalococcoides mccartyi (strain CBDB1).